A 196-amino-acid polypeptide reads, in one-letter code: Molybdenum cofactor guanylyltransferase (196 aa).

Residues 10-12 (LAG), K23, N51, D69, and D99 contribute to the GTP site. A Mg(2+)-binding site is contributed by D99.

Belongs to the MobA family. In terms of assembly, monomer. It depends on Mg(2+) as a cofactor.

The protein resides in the cytoplasm. It carries out the reaction Mo-molybdopterin + GTP + H(+) = Mo-molybdopterin guanine dinucleotide + diphosphate. In terms of biological role, transfers a GMP moiety from GTP to Mo-molybdopterin (Mo-MPT) cofactor (Moco or molybdenum cofactor) to form Mo-molybdopterin guanine dinucleotide (Mo-MGD) cofactor. The chain is Molybdenum cofactor guanylyltransferase from Shewanella sediminis (strain HAW-EB3).